A 488-amino-acid polypeptide reads, in one-letter code: Glutamyl-tRNA(Gln) amidotransferase subunit A (488 aa).

Catalysis depends on charge relay system residues Lys-77 and Ser-152. The active-site Acyl-ester intermediate is Ser-176.

Belongs to the amidase family. GatA subfamily. In terms of assembly, heterotrimer of A, B and C subunits.

The enzyme catalyses L-glutamyl-tRNA(Gln) + L-glutamine + ATP + H2O = L-glutaminyl-tRNA(Gln) + L-glutamate + ADP + phosphate + H(+). Functionally, allows the formation of correctly charged Gln-tRNA(Gln) through the transamidation of misacylated Glu-tRNA(Gln) in organisms which lack glutaminyl-tRNA synthetase. The reaction takes place in the presence of glutamine and ATP through an activated gamma-phospho-Glu-tRNA(Gln). This Streptococcus pyogenes serotype M5 (strain Manfredo) protein is Glutamyl-tRNA(Gln) amidotransferase subunit A.